Reading from the N-terminus, the 309-residue chain is UPF0282 protein Msed_0584 (309 aa).

It belongs to the UPF0282 family.

The sequence is that of UPF0282 protein Msed_0584 from Metallosphaera sedula (strain ATCC 51363 / DSM 5348 / JCM 9185 / NBRC 15509 / TH2).